We begin with the raw amino-acid sequence, 392 residues long: MVSDYIKSYIERSLEQIRDKLPDKVIQDLREALLNTDINLTESDVDKIIDLAVKDYQESLIEPGEAVGIVSAQSIGEPGTQMTLRTFHFAGIRELNVTLGLPRLIEIVDARKTPSTPIMTIYLTDEYKYDKEKALEIARKIEYTKIENVISSISVDITNMSITIQLDEEMLKDKGVDPSSVKKIISKLKLGKIRIEDIDDYTFTIYFEEIDNISALFKMREKLLNTKIKGIKGIRRAIVQKKGDEYVIITDGSNLEGVIGIKGVDVNKIQTNNIHEIADTFGIEAAREAIAREIKKVLEEQGLDVDMRHILLVADIMTRTGVVRQIGRHGVTGEKSSVLARAAFEVTVKHLLDAAARGEMEEFKGVVENIIIGQPIRLGTGIVELTMRLNVR.

Belongs to the RNA polymerase beta' chain family. As to quaternary structure, part of the RNA polymerase complex.

It is found in the cytoplasm. It carries out the reaction RNA(n) + a ribonucleoside 5'-triphosphate = RNA(n+1) + diphosphate. Its function is as follows. DNA-dependent RNA polymerase (RNAP) catalyzes the transcription of DNA into RNA using the four ribonucleoside triphosphates as substrates. Forms part of the jaw domain. The chain is DNA-directed RNA polymerase subunit Rpo1C from Sulfurisphaera tokodaii (strain DSM 16993 / JCM 10545 / NBRC 100140 / 7) (Sulfolobus tokodaii).